Reading from the N-terminus, the 274-residue chain is Penicillin-insensitive murein endopeptidase (274 aa).

An N-terminal signal peptide occupies residues 1-19; that stretch reads MKKTAIALLAWFVSSASLA. Cystine bridges form between cysteine 44–cysteine 265, cysteine 187–cysteine 235, and cysteine 216–cysteine 223. Histidine 110, histidine 113, aspartate 120, aspartate 147, histidine 150, and histidine 211 together coordinate Zn(2+). Residues 225–274 are disordered; it reads DQPLPPPGDGCGAELQSWFEPPKPGTTKPEKKTPPPLPPSCQALLDEHVL.

This sequence belongs to the peptidase M74 family. In terms of assembly, dimer. Requires Zn(2+) as cofactor.

Its subcellular location is the periplasm. Its function is as follows. Murein endopeptidase that cleaves the D-alanyl-meso-2,6-diamino-pimelyl amide bond that connects peptidoglycan strands. Likely plays a role in the removal of murein from the sacculus. This is Penicillin-insensitive murein endopeptidase from Salmonella choleraesuis (strain SC-B67).